The following is a 424-amino-acid chain: Inhibin beta A chain (424 aa).

Residues 1–20 (MPLLWLRGFLLASCWIIVRS) form the signal peptide. Residues 21–308 (SPTPGSEGPG…EDHPHRRRRR (288 aa)) constitute a propeptide that is removed on maturation. An N-linked (GlcNAc...) asparagine glycan is attached at asparagine 165. The disordered stretch occupies residues 257 to 288 (KKKKKEEEGEGKKKDGGDGGAGADEDKEQSHR). Over residues 261-273 (KEEEGEGKKKDGG) the composition is skewed to basic and acidic residues. Cystine bridges form between cysteine 312/cysteine 320, cysteine 319/cysteine 389, cysteine 348/cysteine 421, and cysteine 352/cysteine 423.

Belongs to the TGF-beta family. Dimeric, linked by one or more disulfide bonds. Inhibin A is a dimer of alpha/INHA and beta-A/INHBA. Activin A is a homodimer of beta-A/INHBA. Activin AB is a dimer of beta-A/INHBA and beta-B/INHBB. Interacts with FST and FSTL3; these interactions prevent activin A interaction to its type II receptor. Activin A interacts with ACVR2A. Activin A interacts with BMPR2. Inhibin A interacts with ACVR1; this interaction creates a non-signaling complex (NSC) that inhibits ACVR1-mediated BMP signaling. Inhibin A interacts with ACVR2A.

The protein localises to the secreted. Functionally, inhibins/activins are involved in regulating a number of diverse functions such as hypothalamic and pituitary hormone secretion, gonadal hormone secretion, germ cell development and maturation, erythroid differentiation, insulin secretion, nerve cell survival, embryonic axial development or bone growth, depending on their subunit composition. In terms of biological role, activin A is a homodimer of INHBA that plays a role in several essential biological processes including embryonic development, stem cell maintenance and differentiation, haematopoiesis, cell proliferation and tissue fibrosis. Signals through type I (such as ACVR1B or ACVR1C) and type II receptors (such as ACVR2A, ACVR2B or BMPR2) which, upon ligand binding, phosphorylate SMAD2 and SMAD3 intracellular signaling mediators that form a complex with SMAD4, translocate to the nucleus and modulate gene expression. Can also activate alternative non-canonical intracellular signaling pathways including the p38 MAPK, extracellular signal-regulated kinases 1/2 (ERK1/2) and c-Jun N-terminal kinases (JNKs) to modulate cell migration and differentiation. Alternatively, promotes osteoblastic differentiation via ACVRL1-SMAD1/5/9 pathway. In addition, can engage the type I receptor ACVR1 to form an ACVR1-activin A-type II receptor non-signaling complex (NSC) that renders receptors unavailable for engagement with BMPs, hence resulting in an apparent inhibition of ACVR1-mediated BMP signaling. Its function is as follows. Inhibin A is a dimer of alpha/INHA and beta-A/INHBA that functions as a feedback regulator in the hypothalamic-pituitary-gonadal (HPG) axis. Inhibits the secretion of FSH from the anterior pituitary gland by acting on pituitary gonadotrope cells. Antagonizes activin A by binding to the proteoglycan, betaglycan, and forming a stable complex with and, thereby, sequestering type II activin receptors while excluding type I receptor. The chain is Inhibin beta A chain (INHBA) from Felis catus (Cat).